The chain runs to 1103 residues: Detocs histidine-protein kinase DtcA (1103 aa).

Position 758 is a phosphohistidine; by autocatalysis (His758). A TPR repeat occupies 818–851 (TIINDAKEKVHINTGEFIESAKVFNYAIEIEFVE).

Post-translationally, autophosphorylated.

It catalyses the reaction ATP + protein L-histidine = ADP + protein N-phospho-L-histidine.. Functionally, sensor-kinase member of the two-component regulatory system Detocs that confers resistance to bacteriophage. When the system (DtcA-DtcB-DtcC) is expressed in a susceptible E.coli (strain MG1655) it confers resistance to bacteriophages T2, T4, T5, T7, SECphi4, SECphi6 and SECphi27; the level of resistance varies, resistance to T2, T7 and SECphi4 is not very high. DtcA (this subunit) probably autophosphorylates upon sensing viral infection, and subsequently transfers the phosphate signal to DtcC which activates it, leading to an antiviral defense; DtcB may scavenge phosphorylation signals from accidental activation of DtcA. In Enterobacter cloacae (strain JD6301), this protein is Detocs histidine-protein kinase DtcA.